The sequence spans 136 residues: Large ribosomal subunit protein uL16 (136 aa).

The protein belongs to the universal ribosomal protein uL16 family. In terms of assembly, part of the 50S ribosomal subunit.

Functionally, binds 23S rRNA and is also seen to make contacts with the A and possibly P site tRNAs. This chain is Large ribosomal subunit protein uL16, found in Orientia tsutsugamushi (strain Boryong) (Rickettsia tsutsugamushi).